The sequence spans 201 residues: Small ribosomal subunit protein uS4 (201 aa).

One can recognise an S4 RNA-binding domain in the interval 91–154 (TRLDNVVYRA…RKMEWFEEAQ (64 aa)).

Belongs to the universal ribosomal protein uS4 family. As to quaternary structure, part of the 30S ribosomal subunit. Contacts protein S5. The interaction surface between S4 and S5 is involved in control of translational fidelity.

Its function is as follows. One of the primary rRNA binding proteins, it binds directly to 16S rRNA where it nucleates assembly of the body of the 30S subunit. With S5 and S12 plays an important role in translational accuracy. In Corynebacterium ammoniagenes (Brevibacterium ammoniagenes), this protein is Small ribosomal subunit protein uS4.